We begin with the raw amino-acid sequence, 412 residues long: MDTIIHNTTNRSTDTPHVNITCNITEPLSAIRTTEAVINTFIIFVGGPLNAIVLITQLLTNRVLGYSTPTIYMTNLYSTNFLTLTVLPFIVLSNQWLLPASVASCKFLSVIYYSSCTVGFATVALIAADRYRVLHKRTYARQSYRSTYIILLLTWFAGLIFSMPAAVYTTVVIHNGTNGQSSNGHATCVLYFIADEVYTVLLSWKVLLTLVWGAAPVIMMTWFYAFFYSTVQRASQKQRSRTLTFVSVLLISFVALQTPYVSIMIFNSYATAAWPMDCEHLTLRRTIGTLSRLVPHLHCLINPILYALLGHDFLQRMRQCFRGQLLDRRAFLRSQQNQRATAETNLAAGNNSQSVATSLDTSSKNCNQHAKRSVSFNFPSGTWKGGQKTASNDTSTKIPHRLSQSHHNLSGV.

The Virion surface segment spans residues 1–35; the sequence is MDTIIHNTTNRSTDTPHVNITCNITEPLSAIRTTE. Residues Asn-7, Asn-19, and Asn-23 are each glycosylated (N-linked (GlcNAc...) asparagine; by host). Residues 36-56 form a helical membrane-spanning segment; the sequence is AVINTFIIFVGGPLNAIVLIT. The Intravirion segment spans residues 57–80; that stretch reads QLLTNRVLGYSTPTIYMTNLYSTN. Residues 81–101 traverse the membrane as a helical segment; the sequence is FLTLTVLPFIVLSNQWLLPAS. Over 102 to 106 the chain is Virion surface; sequence VASCK. The cysteines at positions 105 and 188 are disulfide-linked. The chain crosses the membrane as a helical span at residues 107-127; it reads FLSVIYYSSCTVGFATVALIA. At 128-147 the chain is on the intravirion side; it reads ADRYRVLHKRTYARQSYRST. Residues 148 to 168 form a helical membrane-spanning segment; it reads YIILLLTWFAGLIFSMPAAVY. At 169–206 the chain is on the virion surface side; that stretch reads TTVVIHNGTNGQSSNGHATCVLYFIADEVYTVLLSWKV. A helical membrane pass occupies residues 207–227; the sequence is LLTLVWGAAPVIMMTWFYAFF. Over 228 to 244 the chain is Intravirion; it reads YSTVQRASQKQRSRTLT. The helical transmembrane segment at 245–265 threads the bilayer; the sequence is FVSVLLISFVALQTPYVSIMI. The Virion surface segment spans residues 266-292; the sequence is FNSYATAAWPMDCEHLTLRRTIGTLSR. Residues 293–313 form a helical membrane-spanning segment; it reads LVPHLHCLINPILYALLGHDF. Over 314–412 the chain is Intravirion; sequence LQRMRQCFRG…SQSHHNLSGV (99 aa). The tract at residues 377–412 is disordered; the sequence is NFPSGTWKGGQKTASNDTSTKIPHRLSQSHHNLSGV. Polar residues predominate over residues 388-397; it reads KTASNDTSTK.

Belongs to the G-protein coupled receptor 1 family. In terms of assembly, heterodimerizes with US28.

The protein localises to the virion. Its subcellular location is the host cell membrane. It is found in the host cytoplasm. In terms of biological role, G-protein-coupled receptor (vGPCR) that constitutively activates multiple oncogenic signaling pathways including STAT3, AP-1, phospholipase C, NF-kappa-B or cAMP-responsive element (CRE) pathways. Plays an important role in viral reactivation from latency through activation of host CREB1, facilitating its recruitment to the viral major immediate early (MIE) genes. In turn, expression of the MIE-driven genes such as UL123 are de-repressed. Also facilitates virus dissemination via the extracellular and cell-to-cell route. The polypeptide is G-protein coupled receptor homolog UL33 (UL33) (Human cytomegalovirus (strain Merlin) (HHV-5)).